The chain runs to 313 residues: MILSVIHIFLYFVPVLLAVAFLTLTERKVIGYVQLRKGPNVVGPYGLLQPIADGVKLFIKEPIKPSSSNPSVFFFAPMLALILALLLWMPVPLMDAFIELNFAVLFVLAISSLSVYSIMASGWSSNSKYALLGALRAVAQMVSYEVSLGLIILSLICLVGGFNLAQFFSAQEEVMLMLSCWPLGIMWFISTVAETNRSPFDLTEGESELVSGFNVEYSGGPFALFFLAEYANILFMNVLSALLFLAAHFSLLGVAVKVGLLAGLYLWFRASYPRFRYDQLMHLAWKSFLPLSLGLLMLNFSLPLTFSGIGGGL.

8 helical membrane-spanning segments follow: residues 2–22 (ILSV…VAFL), 72–92 (VFFF…MPVP), 102–122 (FAVL…MASG), 148–168 (LGLI…AQFF), 173–193 (EVML…STVA), 222–244 (FALF…ALLF), 249–268 (FSLL…YLWF), and 293–313 (LGLL…GGGL).

The protein belongs to the complex I subunit 1 family.

The protein localises to the mitochondrion inner membrane. It carries out the reaction a ubiquinone + NADH + 5 H(+)(in) = a ubiquinol + NAD(+) + 4 H(+)(out). Functionally, core subunit of the mitochondrial membrane respiratory chain NADH dehydrogenase (Complex I) that is believed to belong to the minimal assembly required for catalysis. Complex I functions in the transfer of electrons from NADH to the respiratory chain. The immediate electron acceptor for the enzyme is believed to be ubiquinone. This is NADH-ubiquinone oxidoreductase chain 1 (ND1) from Branchiostoma lanceolatum (Common lancelet).